Reading from the N-terminus, the 146-residue chain is Angiogenin (146 aa).

Residues 1–24 form the signal peptide; it reads MVMGLGLFLLVFMLGLGLTSPTLA. Gln25 bears the Pyrrolidone carboxylic acid mark. The Proton acceptor role is filled by His37. Arg45 provides a ligand contact to tRNA. 3 disulfides stabilise this stretch: Cys50–Cys105, Cys63–Cys116, and Cys81–Cys131. A Nucleolar localization signal motif is present at residues 55 to 59; it reads RRQGM. Cys105 and Ile127 together coordinate tRNA. The active-site Proton donor is His138.

Belongs to the pancreatic ribonuclease family. Homodimer. Interacts with RNH1; inhibiting ANG ribonuclease activity. Interacts with PCNA.

It is found in the secreted. Its subcellular location is the nucleus. The protein resides in the nucleolus. It localises to the cytoplasm. The protein localises to the stress granule. Has weak tRNA ribonuclease activity by itself due to partial autoinhibition by its C-terminus, which folds into a short alpha-helix that partially occludes the substrate-binding site. In absence of stress, the ribonuclease activity is inhibited by RNH1 in the cytoplasm. In response to stress, dissociates from RNH1 in the cytoplasm and associates with cytoplasmic ribosomes with vacant A-sites: ribosomes directly activate the tRNA ribonuclease activity of ANG by refolding the C-terminal alpha-helix. In response to stress, the angiogenic activity of ANG is inhibited by RNH1 in the nucleus. Functionally, secreted ribonuclease that can either promote or restrict cell proliferation of target cells, depending on the context. Endocytosed in target cells via its receptor PLXNB2 and translocates to the cytoplasm or nucleus. Under stress conditions, localizes to the cytoplasm and promotes the assembly of stress granules (SGs): specifically cleaves a subset of tRNAs within anticodon loops to produce tRNA-derived stress-induced fragments (tiRNAs), resulting in translation repression and inhibition of cell proliferation. tiRNas also prevent formation of apoptosome, thereby promoting cell survival. Preferentially cleaves RNAs between a pyrimidine and an adenosine residue, suggesting that it cleaves the anticodon loop of tRNA(Ala) (32-UUAGCAU-38) after positions 33 and 36. Cleaves a subset of tRNAs, including tRNA(Ala), tRNA(Glu), tRNA(Gly), tRNA(Lys), tRNA(Val), tRNA(His), tRNA(Asp) and tRNA(Sec). Under growth conditions and in differentiated cells, translocates to the nucleus and stimulates ribosomal RNA (rRNA) transcription, including that containing the initiation site sequences of 45S rRNA, thereby promoting cell growth and proliferation. Angiogenin induces vascularization of normal and malignant tissues via its ability to promote rRNA transcription. Involved in hematopoietic stem and progenitor cell (HSPC) growth and survival by promoting rRNA transcription in growth conditions and inhibiting translation in response to stress, respectively. Mediates the crosstalk between myeloid and intestinal epithelial cells to protect the intestinal epithelial barrier integrity: secreted by myeloid cells and promotes intestinal epithelial cells proliferation and survival. Also mediates osteoclast-endothelial cell crosstalk in growing bone: produced by osteoclasts and protects the neighboring vascular cells against senescence by promoting rRNA transcription. The protein is Angiogenin (ANG) of Miopithecus talapoin (Angolan talapoin).